The sequence spans 243 residues: 1-(5-phosphoribosyl)-5-[(5-phosphoribosylamino)methylideneamino] imidazole-4-carboxamide isomerase (243 aa).

Asp8 functions as the Proton acceptor in the catalytic mechanism. Asp128 serves as the catalytic Proton donor.

This sequence belongs to the HisA/HisF family.

It localises to the cytoplasm. The enzyme catalyses 1-(5-phospho-beta-D-ribosyl)-5-[(5-phospho-beta-D-ribosylamino)methylideneamino]imidazole-4-carboxamide = 5-[(5-phospho-1-deoxy-D-ribulos-1-ylimino)methylamino]-1-(5-phospho-beta-D-ribosyl)imidazole-4-carboxamide. Its pathway is amino-acid biosynthesis; L-histidine biosynthesis; L-histidine from 5-phospho-alpha-D-ribose 1-diphosphate: step 4/9. The protein is 1-(5-phosphoribosyl)-5-[(5-phosphoribosylamino)methylideneamino] imidazole-4-carboxamide isomerase of Opitutus terrae (strain DSM 11246 / JCM 15787 / PB90-1).